The following is a 197-amino-acid chain: Shikimate kinase (197 aa).

15 to 20 (GSGKSS) contributes to the ATP binding site. Ser-19 serves as a coordination point for Mg(2+). 3 residues coordinate substrate: Asp-37, Arg-61, and Gly-83. Arg-121 serves as a coordination point for ATP. Residue Arg-148 coordinates substrate.

The protein belongs to the shikimate kinase family. As to quaternary structure, monomer. Requires Mg(2+) as cofactor.

It is found in the cytoplasm. It catalyses the reaction shikimate + ATP = 3-phosphoshikimate + ADP + H(+). Its pathway is metabolic intermediate biosynthesis; chorismate biosynthesis; chorismate from D-erythrose 4-phosphate and phosphoenolpyruvate: step 5/7. Catalyzes the specific phosphorylation of the 3-hydroxyl group of shikimic acid using ATP as a cosubstrate. In Chlorobium phaeovibrioides (strain DSM 265 / 1930) (Prosthecochloris vibrioformis (strain DSM 265)), this protein is Shikimate kinase.